We begin with the raw amino-acid sequence, 337 residues long: Ornithine carbamoyltransferase, catabolic (337 aa).

Carbamoyl phosphate is bound by residues 57–60, Gln-84, Arg-108, and 135–138; these read STRT and HPTQ. L-ornithine contacts are provided by residues Asn-167, Asp-231, and 235 to 236; that span reads SM. Carbamoyl phosphate contacts are provided by residues 272 to 273 and Arg-317; that span reads CL.

Belongs to the aspartate/ornithine carbamoyltransferase superfamily. OTCase family.

The protein localises to the cytoplasm. The catalysed reaction is carbamoyl phosphate + L-ornithine = L-citrulline + phosphate + H(+). The protein operates within amino-acid degradation; L-arginine degradation via ADI pathway; carbamoyl phosphate from L-arginine: step 2/2. Its function is as follows. Reversibly catalyzes the transfer of the carbamoyl group from carbamoyl phosphate (CP) to the N(epsilon) atom of ornithine (ORN) to produce L-citrulline. The chain is Ornithine carbamoyltransferase, catabolic from Streptococcus suis (strain 89/1591).